Reading from the N-terminus, the 874-residue chain is Probable inorganic carbon transporter subunit DabA (874 aa).

Cys-398, Asp-400, His-580, and Cys-595 together coordinate Zn(2+).

It belongs to the inorganic carbon transporter (TC 9.A.2) DabA family. As to quaternary structure, forms a complex with DabB. The cofactor is Zn(2+).

It is found in the cell membrane. Part of an energy-coupled inorganic carbon pump. This Bacillus cereus (strain ATCC 10987 / NRS 248) protein is Probable inorganic carbon transporter subunit DabA.